Reading from the N-terminus, the 820-residue chain is Leucine--tRNA ligase (820 aa).

Positions 40–51 match the 'HIGH' region motif; the sequence is PYPSGAGLHVGH. Positions 601–605 match the 'KMSKS' region motif; that stretch reads KMSKS. K604 provides a ligand contact to ATP.

Belongs to the class-I aminoacyl-tRNA synthetase family.

Its subcellular location is the cytoplasm. It carries out the reaction tRNA(Leu) + L-leucine + ATP = L-leucyl-tRNA(Leu) + AMP + diphosphate. This Chlamydia abortus (strain DSM 27085 / S26/3) (Chlamydophila abortus) protein is Leucine--tRNA ligase.